Consider the following 529-residue polypeptide: Bifunctional purine biosynthesis protein PurH (529 aa).

One can recognise an MGS-like domain in the interval 1–146 (MAPTALLSVS…KNHAHVAVLT (146 aa)).

It belongs to the PurH family.

It carries out the reaction (6R)-10-formyltetrahydrofolate + 5-amino-1-(5-phospho-beta-D-ribosyl)imidazole-4-carboxamide = 5-formamido-1-(5-phospho-D-ribosyl)imidazole-4-carboxamide + (6S)-5,6,7,8-tetrahydrofolate. It catalyses the reaction IMP + H2O = 5-formamido-1-(5-phospho-D-ribosyl)imidazole-4-carboxamide. It participates in purine metabolism; IMP biosynthesis via de novo pathway; 5-formamido-1-(5-phospho-D-ribosyl)imidazole-4-carboxamide from 5-amino-1-(5-phospho-D-ribosyl)imidazole-4-carboxamide (10-formyl THF route): step 1/1. It functions in the pathway purine metabolism; IMP biosynthesis via de novo pathway; IMP from 5-formamido-1-(5-phospho-D-ribosyl)imidazole-4-carboxamide: step 1/1. The polypeptide is Bifunctional purine biosynthesis protein PurH (Synechococcus sp. (strain CC9311)).